A 303-amino-acid chain; its full sequence is Probable cell division protein WhiA (303 aa).

The H-T-H motif DNA-binding region spans 272 to 303 (SIQQLADSLSTPLTKSGVNHRLRKINKIADEL).

It belongs to the WhiA family.

Its function is as follows. Involved in cell division and chromosome segregation. The polypeptide is Probable cell division protein WhiA (Streptococcus pneumoniae serotype 2 (strain D39 / NCTC 7466)).